The primary structure comprises 170 residues: ATP synthase subunit b (170 aa).

The chain crosses the membrane as a helical span at residues 15-37; sequence FNLFETNILNWAVVIFGLYKFLP. The tract at residues 72 to 98 is disordered; it reads AKKDLSSAEEKASQIKADSLKRSESIR.

This sequence belongs to the ATPase B chain family. As to quaternary structure, F-type ATPases have 2 components, F(1) - the catalytic core - and F(0) - the membrane proton channel. F(1) has five subunits: alpha(3), beta(3), gamma(1), delta(1), epsilon(1). F(0) has four main subunits: a(1), b(1), b'(1) and c(10-14). The alpha and beta chains form an alternating ring which encloses part of the gamma chain. F(1) is attached to F(0) by a central stalk formed by the gamma and epsilon chains, while a peripheral stalk is formed by the delta, b and b' chains.

Its subcellular location is the cellular thylakoid membrane. Its function is as follows. F(1)F(0) ATP synthase produces ATP from ADP in the presence of a proton or sodium gradient. F-type ATPases consist of two structural domains, F(1) containing the extramembraneous catalytic core and F(0) containing the membrane proton channel, linked together by a central stalk and a peripheral stalk. During catalysis, ATP synthesis in the catalytic domain of F(1) is coupled via a rotary mechanism of the central stalk subunits to proton translocation. In terms of biological role, component of the F(0) channel, it forms part of the peripheral stalk, linking F(1) to F(0). The polypeptide is ATP synthase subunit b (Prochlorococcus marinus (strain MIT 9215)).